The sequence spans 606 residues: MSSCINPSTLVTSVNAFKCLPLATNKAAIRIMAKYKPVQCLISAKYDNLTVDRRSANYQPSIWDHDFLQSLNSNYTDEAYKRRAEELRGKVKIAIKDVIEPLDQLELIDNLQRLGLAHRFETEIRNILNNIYNNNKDYNWRKENLYATSLEFRLLRQHGYPVSQEVFNGFKDDQGGFICDDFKGILSLHEASYYSLEGESIMEEAWQFTSKHLKEVMISKNMEEDVFVAEQAKRALELPLHWKVPMLEARWFIHIYERREDKNHLLLELAKMEFNTLQAIYQEELKEISGWWKDTGLGEKLSFARNRLVASFLWSMGIAFEPQFAYCRRVLTISIALITVIDDIYDVYGTLDELEIFTDAVERWDINYALKHLPGYMKMCFLALYNFVNEFAYYVLKQQDFDLLLSIKNAWLGLIQAYLVEAKWYHSKYTPKLEEYLENGLVSITGPLIITISYLSGTNPIIKKELEFLESNPDIVHWSSKIFRLQDDLGTSSDEIQRGDVPKSIQCYMHETGASEEVARQHIKDMMRQMWKKVNAYTADKDSPLTGTTTEFLLNLVRMSHFMYLHGDGHGVQNQETIDVGFTLLFQPIPLEDKHMAFTASPGTKG.

The N-terminal 32 residues, 1 to 32, are a transit peptide targeting the chloroplast; the sequence is MSSCINPSTLVTSVNAFKCLPLATNKAAIRIM. 2 residues coordinate Mn(2+): D342 and D346. Substrate contacts are provided by D342, D346, R484, D487, and K503. The short motif at 342-346 is the DDXXD motif element; sequence DDIYD. D487 provides a ligand contact to Mn(2+).

The protein belongs to the terpene synthase family. Requires Mg(2+) as cofactor. Mn(2+) serves as cofactor.

It localises to the plastid. It is found in the chloroplast. It carries out the reaction (2E)-geranyl diphosphate = (4R)-limonene + diphosphate. The chain is (R)-limonene synthase 1, chloroplastic from Citrus limon (Lemon).